We begin with the raw amino-acid sequence, 144 residues long: Large ribosomal subunit protein uL15 (144 aa).

The tract at residues Met-1–Gly-53 is disordered. Residues Arg-21–Gly-31 show a composition bias toward gly residues.

Belongs to the universal ribosomal protein uL15 family. As to quaternary structure, part of the 50S ribosomal subunit.

Binds to the 23S rRNA. This is Large ribosomal subunit protein uL15 from Pectobacterium carotovorum subsp. carotovorum (strain PC1).